Here is a 1366-residue protein sequence, read N- to C-terminus: MTSSKPKKSSRVRKTTKNSKKNHNTMMPLLPKTPPSFKNKVVDKKALKNLVSWAYKTHGTAVTAAMADNLKDLGFKYATQAAVSISVNDLKVPEAKQDLIGQAEAQITATEECYRLGEITEVERHTKVIDTWTETNERLVDAVKNNFNQNDPLNSVWMMANSGARGNMSQVRQLVGMRGLMANPQGEIIDLPIRTNFREGLTVTEYVISSYGARKGLVDTALRTADSGYLTRRLVDVAQDVIVREEDCGTERSIVINSEDGKFGSRLIGRLSAEDILDSEGNLIVPKNTAIDPSLSKTLETSLISKVNIRSPLTCEANRSVCRKCYGWALAHNHLVDLGEAVGIIAAQSIGEPGTQLTMRTFHTGGVSTAESGVVRSKIKGKVEFGSKAKIRGYRTPHGVEAKQAEVDFLLKIIPTGSITNKAQKIEVTSGSLLFVEDGQDIDSDITVAQITSGAVKKSVEKATKDVICDLAGEVRYDKVIQPKEVTDRQGNITLKAQRLGRLWVLAGDVYNLPPNAKPVVSTETKVEQGTVLAEASQSSEFGGEVRLRESVGDSREVQIVTTSMLLSNFKLIEESTHSGELFHLESNDGTIYRLNTSPGSKISSGEVIADLADERFRTKTGGLVKYAPGLSVKKARSSKNGFEVSQGGTLLWIPQETHEINKDISLLMTEDMEWIEAGTEVVKDIFSQTSGIVTVTQKNDILREITVRNGSFHECEDEEILSRFTEEGKLVNPGEKIIDGVDNDEILFVQKLETSKGKGLLLRTVEEYTIPNEAELPELSHVKQEKGPSLALKAIQRLSYKDGELIKSVEGVELLKTNLSIESFDATPQMTIDVETIQDKSDKSINRLNLVILESILVRRDTISDSSHGSTHTELQINNNQLVKAGDVIATTQILCKERGVLQLPDSVEGEPIRRLIVERNEDKIKINIKDKAVVKTGDRVVDGDLISKGVKSTSCGEIEEVSSEYVILRIGRPYMVSPDSVLHVKDGDLVLRGDGLALLVFERQKTGDIVQGLPRIEELLEARRPRDSSILCKKSGVVQIKEGTDEESVSLSVIERDDSISEYQLLMGQNIMVSDGQQVTGGELLTDGPINPHDLLDCLFTDLKDQKPLMEAAQESISKLQRKMVNEVQNVYKSQGVAISDKHIEVIVRQMTSKVRIEDAGDTTLLPGELIELRQVEDTNQAMSITGGAPAEFTPVLLGITKASLNTDSFISAASFQETTRVLTEAAIEGKSDWLRGLKENVIIGRLIPAGTGFSGFVEELASEAGPHPDILAEESGGYRRTQNLRPDYTVDMPQTPIVSSTAILDDPSDEDLETTRNRHGIDPTSSNFAAFARPNAENQFSEDQLPDPAALEGLQEEGLLSDG.

Positions 1–23 are enriched in basic residues; it reads MTSSKPKKSSRVRKTTKNSKKNH. Residues 1-37 form a disordered region; that stretch reads MTSSKPKKSSRVRKTTKNSKKNHNTMMPLLPKTPPSF. The Zn(2+) site is built by Cys248, Cys315, Cys322, and Cys325. Positions 1304–1366 are disordered; it reads TAILDDPSDE…LQEEGLLSDG (63 aa). Positions 1354 to 1366 are enriched in low complexity; the sequence is LEGLQEEGLLSDG.

Belongs to the RNA polymerase beta' chain family. RpoC2 subfamily. In cyanobacteria the RNAP catalytic core is composed of 2 alpha, 1 beta, 1 beta', 1 gamma and 1 omega subunit. When a sigma factor is associated with the core the holoenzyme is formed, which can initiate transcription. The cofactor is Zn(2+).

It carries out the reaction RNA(n) + a ribonucleoside 5'-triphosphate = RNA(n+1) + diphosphate. DNA-dependent RNA polymerase catalyzes the transcription of DNA into RNA using the four ribonucleoside triphosphates as substrates. The sequence is that of DNA-directed RNA polymerase subunit beta' from Prochlorococcus marinus subsp. pastoris (strain CCMP1986 / NIES-2087 / MED4).